The following is a 443-amino-acid chain: Amino-acid acetyltransferase (443 aa).

The region spanning 296–436 is the N-acetyltransferase domain; the sequence is EQIRRATIND…KMYNYQRRSK (141 aa).

It belongs to the acetyltransferase family. ArgA subfamily. In terms of assembly, homohexamer.

It is found in the cytoplasm. It catalyses the reaction L-glutamate + acetyl-CoA = N-acetyl-L-glutamate + CoA + H(+). Its pathway is amino-acid biosynthesis; L-arginine biosynthesis; N(2)-acetyl-L-ornithine from L-glutamate: step 1/4. The polypeptide is Amino-acid acetyltransferase (Salmonella arizonae (strain ATCC BAA-731 / CDC346-86 / RSK2980)).